The primary structure comprises 446 residues: SWI/SNF chromatin-remodeling accessory subunit 1 (446 aa).

Residues 1-53 (MQTQARPPVPQGPRFNHPATPQQVRRPINAPLPGQTAQIQGNRGPQPPKKKKR) are disordered. Residues 220-297 (YQPMKFKLHP…PQRLHQLLQQ (78 aa)) enclose the SWIB/MDM2 domain.

It belongs to the SMARCD family. In terms of assembly, component of the multiprotein chromatin-remodeling complexes SWI/SNF: SWI/SNF-A (BAF), SWI/SNF-B (PBAF) and related complexes. The canonical complex contains a catalytic subunit swsn-4, core subunits swsn-1 and swsn-5, and accessory subunits swsn-3, swsn-6, phf-10, dpff-1, swsn-9 and either ham-3/swsn-2.1 or swsn-2.2. May interact with blmp-1. In terms of tissue distribution, broadly expressed in all cell types.

It is found in the nucleus. Functionally, involved in transcriptional activation and repression of select genes by chromatin remodeling (alteration of DNA-nucleosome topology). Component of SWI/SNF chromatin remodeling complexes that carry out key enzymatic activities, changing chromatin structure by altering DNA-histone contacts within a nucleosome in an ATP-dependent manner. Required for the blmp-1-mediated transcriptional activation or repression of several hypodermal genes such as bed-3. Involved in regulating differentiation, migration and axon pathfinding of specific serotonergic neurons (HSNs). Probably regulates vulva development through the let-60/Ras pathway. May be involved in regulation of developmental processes in the embryo driven by the Wnt pathway. Involved in gonadogenesis. This chain is SWI/SNF chromatin-remodeling accessory subunit 1, found in Caenorhabditis elegans.